The sequence spans 157 residues: Phospholipase A2 phaiodactylipin (157 aa).

The Ca(2+) site is built by Trp34 and Gly36. Disulfide bonds link Cys35–Cys56, Cys55–Cys94, Cys62–Cys87, Cys85–Cys127, and Cys132–Cys143. Asn43 carries N-linked (GlcNAc...) asparagine glycosylation. Residue His59 is part of the active site. Asp60 contacts Ca(2+). The active site involves Asp88. A glycan (N-linked (GlcNAc...) asparagine) is linked at Asn101. Positions 134–139 are cleaved as a propeptide — removed in mature form; that stretch reads DEKSAR. An N-linked (GlcNAc...) asparagine glycan is attached at Asn153.

The protein belongs to the phospholipase A2 family. Group III subfamily. As to quaternary structure, heterodimer composed of a small subunit and a large subunit; disulfide-linked. It depends on Ca(2+) as a cofactor. As to expression, expressed by the venom gland.

The protein localises to the secreted. The catalysed reaction is a 1,2-diacyl-sn-glycero-3-phosphocholine + H2O = a 1-acyl-sn-glycero-3-phosphocholine + a fatty acid + H(+). In terms of biological role, scorpion venom phospholipase A2 (PLA2) that is lethal to crickets and crustaceae. Causes inflammation in mice and lysis of human erythrocytes. Has a mild anticoagulant effect on human platelets. PLA2 catalyzes the calcium-dependent hydrolysis of the 2-acyl groups in 3-sn-phosphoglycerides. This chain is Phospholipase A2 phaiodactylipin, found in Anuroctonus phaiodactylus (Mafia scorpion).